A 551-amino-acid chain; its full sequence is CTP synthase (551 aa).

Positions 1–267 (MPKYVFVTGG…GRYVMEHLGW (267 aa)) are amidoligase domain. Ser13 lines the CTP pocket. UTP is bound at residue Ser13. Residue 14–19 (SVGKGI) coordinates ATP. Tyr54 contributes to the L-glutamine binding site. Asp71 provides a ligand contact to ATP. Mg(2+)-binding residues include Asp71 and Glu141. Residues 148-150 (DIE), 188-193 (KTKPTQ), and Lys224 each bind CTP. UTP contacts are provided by residues 188-193 (KTKPTQ) and Lys224. Residues 292–532 (RIALVGKYVE…IGVAKHVLRE (241 aa)) form the Glutamine amidotransferase type-1 domain. An L-glutamine-binding site is contributed by Gly353. Cys380 functions as the Nucleophile; for glutamine hydrolysis in the catalytic mechanism. L-glutamine contacts are provided by residues 381-384 (YGLH), Glu404, and Arg460. Catalysis depends on residues His505 and Glu507.

It belongs to the CTP synthase family. In terms of assembly, homotetramer.

The catalysed reaction is UTP + L-glutamine + ATP + H2O = CTP + L-glutamate + ADP + phosphate + 2 H(+). The enzyme catalyses L-glutamine + H2O = L-glutamate + NH4(+). It catalyses the reaction UTP + NH4(+) + ATP = CTP + ADP + phosphate + 2 H(+). It functions in the pathway pyrimidine metabolism; CTP biosynthesis via de novo pathway; CTP from UDP: step 2/2. Its activity is regulated as follows. Allosterically activated by GTP, when glutamine is the substrate; GTP has no effect on the reaction when ammonia is the substrate. The allosteric effector GTP functions by stabilizing the protein conformation that binds the tetrahedral intermediate(s) formed during glutamine hydrolysis. Inhibited by the product CTP, via allosteric rather than competitive inhibition. In terms of biological role, catalyzes the ATP-dependent amination of UTP to CTP with either L-glutamine or ammonia as the source of nitrogen. Regulates intracellular CTP levels through interactions with the four ribonucleotide triphosphates. This chain is CTP synthase, found in Thermomicrobium roseum (strain ATCC 27502 / DSM 5159 / P-2).